Consider the following 529-residue polypeptide: N5-hydroxyornithine acetylase sidL (529 aa).

Disordered stretches follow at residues 59–95 and 239–258; these read ASVNGEGHAQPAGDDHATAVDAGDGSAQKRKKRVRPF and SPWPGSSGSPNDSRPGSPVA. Residue H462 coordinates substrate. E498 acts as the Proton acceptor in catalysis.

The protein belongs to the lysine N-acyltransferase mbtK family.

The protein localises to the cytoplasm. It is found in the cytosol. Its pathway is siderophore biosynthesis. Acyltransferase; part of the gene cluster that mediates the biosynthesis of at least 11 siderophores, including beauverichelin A, dimerumic acid (DA), Na-dimethyl coprogen (NADC), eleutherazine B, ferricrocin (FC), fusarinine A, fusarinine C (FsC), metachelin A, mevalonolactone, rhodotorulic acid (RA) and tenellin. This cocktail of siderophores for iron metabolism is essential for virulence, and more specifically for the fungal virulence in penetrating through the host cuticle. Siderophore synthesis is also involved in conidial germination under iron-deficient conditions. SIDL contributes to partial production of ferricrocin under iron-limiting conditions via the acetylation of N(5)-hydroxyornithine. In Beauveria bassiana (strain ARSEF 2860) (White muscardine disease fungus), this protein is N5-hydroxyornithine acetylase sidL.